Consider the following 630-residue polypeptide: Membrane protein insertase YidC (630 aa).

A run of 5 helical transmembrane segments spans residues 10–30, 396–416, 470–490, 528–548, and 571–591; these read LMFL…VMGP, MVGN…LILF, VPML…TVTI, LIGA…LYGF, and FFPI…VIYW.

Belongs to the OXA1/ALB3/YidC family. Type 1 subfamily. Interacts with the Sec translocase complex via SecD. Specifically interacts with transmembrane segments of nascent integral membrane proteins during membrane integration.

It is found in the cell inner membrane. Functionally, required for the insertion and/or proper folding and/or complex formation of integral membrane proteins into the membrane. Involved in integration of membrane proteins that insert both dependently and independently of the Sec translocase complex, as well as at least some lipoproteins. Aids folding of multispanning membrane proteins. The protein is Membrane protein insertase YidC of Caulobacter sp. (strain K31).